The sequence spans 216 residues: Inner membrane assembly complex subunit 22 (216 aa).

The transit peptide at 1–26 (MFMARQVLRNGLFLRSLAPIKITART) directs the protein to the mitochondrion. The Mitochondrial matrix segment spans residues 27 to 43 (VASANAGIKRKSRFDKT). The chain crosses the membrane as a helical span at residues 44–63 (MIKPLLLVMIFGSILNAVIA). A coiled-coil region spans residues 64 to 93 (EKRNIIDMERKYKLKLDKLKELIRRVHDNN). At 64-216 (EKRNIIDMER…KEHDKIPKFL (153 aa)) the chain is on the mitochondrial intermembrane side.

As to quaternary structure, component of the inner membrane assembly (INA) complex, composed of INA17 and INA22. Interacts with a subset of F(1)F(0)-ATP synthase subunits of the F(1)-domain and the peripheral stalk.

It localises to the mitochondrion inner membrane. Functionally, component of the INA complex (INAC) that promotes the biogenesis of mitochondrial F(1)F(0)-ATP synthase. INAC facilitates the assembly of the peripheral stalk and promotes the assembly of the catalytic F(1)-domain with the membrane-embedded F(0)-domain. This is Inner membrane assembly complex subunit 22 from Saccharomyces cerevisiae (strain ATCC 204508 / S288c) (Baker's yeast).